Here is a 351-residue protein sequence, read N- to C-terminus: MGRFEDDAEVEDREVSPALTVGEGDIDASLRPRSLGEFIGQPRVREQLQLVLEGAKKRGGTPDHILLSGPPGLGKTSLAMIIAAELGSSLRVTSGPALERAGDLAAMLSNLVEHDVLFIDEIHRIARPAEEMLYLAMEDFRVDVVVGKGPGATSIPLEVAPFTLVGATTRSGALTGPLRDRFGFTAHMDFYEPVELERVLARSAGILGIELGAEAGAEIARRSRGTPRIANRLLRRVRDFAEVRADGIITRDIAKSALEVYDVDELGLDRLDRAVLSALTRSFNGGPVGVSTLAVAVGEEATTVEEVCEPFLVRAGMIARTPRGRVATPLAWTHLGLQPPVTGIGQAGLFD.

Positions 1 to 12 (MGRFEDDAEVED) are enriched in acidic residues. The segment at 1–23 (MGRFEDDAEVEDREVSPALTVGE) is disordered. Positions 1 to 191 (MGRFEDDAEV…FGFTAHMDFY (191 aa)) are large ATPase domain (RuvB-L). ATP-binding positions include leucine 30, arginine 31, glycine 72, lysine 75, threonine 76, serine 77, 138 to 140 (EDF), arginine 181, tyrosine 191, and arginine 228. Threonine 76 is a Mg(2+) binding site. Residues 192-262 (EPVELERVLA…IAKSALEVYD (71 aa)) are small ATPAse domain (RuvB-S). The tract at residues 265–351 (ELGLDRLDRA…TGIGQAGLFD (87 aa)) is head domain (RuvB-H). DNA-binding residues include arginine 320 and arginine 325.

The protein belongs to the RuvB family. Homohexamer. Forms an RuvA(8)-RuvB(12)-Holliday junction (HJ) complex. HJ DNA is sandwiched between 2 RuvA tetramers; dsDNA enters through RuvA and exits via RuvB. An RuvB hexamer assembles on each DNA strand where it exits the tetramer. Each RuvB hexamer is contacted by two RuvA subunits (via domain III) on 2 adjacent RuvB subunits; this complex drives branch migration. In the full resolvosome a probable DNA-RuvA(4)-RuvB(12)-RuvC(2) complex forms which resolves the HJ.

It is found in the cytoplasm. The catalysed reaction is ATP + H2O = ADP + phosphate + H(+). Its function is as follows. The RuvA-RuvB-RuvC complex processes Holliday junction (HJ) DNA during genetic recombination and DNA repair, while the RuvA-RuvB complex plays an important role in the rescue of blocked DNA replication forks via replication fork reversal (RFR). RuvA specifically binds to HJ cruciform DNA, conferring on it an open structure. The RuvB hexamer acts as an ATP-dependent pump, pulling dsDNA into and through the RuvAB complex. RuvB forms 2 homohexamers on either side of HJ DNA bound by 1 or 2 RuvA tetramers; 4 subunits per hexamer contact DNA at a time. Coordinated motions by a converter formed by DNA-disengaged RuvB subunits stimulates ATP hydrolysis and nucleotide exchange. Immobilization of the converter enables RuvB to convert the ATP-contained energy into a lever motion, pulling 2 nucleotides of DNA out of the RuvA tetramer per ATP hydrolyzed, thus driving DNA branch migration. The RuvB motors rotate together with the DNA substrate, which together with the progressing nucleotide cycle form the mechanistic basis for DNA recombination by continuous HJ branch migration. Branch migration allows RuvC to scan DNA until it finds its consensus sequence, where it cleaves and resolves cruciform DNA. This chain is Holliday junction branch migration complex subunit RuvB, found in Mycolicibacterium smegmatis (strain ATCC 700084 / mc(2)155) (Mycobacterium smegmatis).